The chain runs to 466 residues: Asparagine--tRNA ligase (466 aa).

Belongs to the class-II aminoacyl-tRNA synthetase family. In terms of assembly, homodimer.

Its subcellular location is the cytoplasm. The catalysed reaction is tRNA(Asn) + L-asparagine + ATP = L-asparaginyl-tRNA(Asn) + AMP + diphosphate + H(+). This Yersinia enterocolitica serotype O:8 / biotype 1B (strain NCTC 13174 / 8081) protein is Asparagine--tRNA ligase.